Consider the following 105-residue polypeptide: Nucleoid-associated protein ABC0038 (105 aa).

Residues 1-22 (MEMKNMGNMMKQMQKMQKQMMK) are compositionally biased toward low complexity. Residues 1–26 (MEMKNMGNMMKQMQKMQKQMMKAQEE) are disordered.

Belongs to the YbaB/EbfC family. In terms of assembly, homodimer.

It is found in the cytoplasm. Its subcellular location is the nucleoid. Its function is as follows. Binds to DNA and alters its conformation. May be involved in regulation of gene expression, nucleoid organization and DNA protection. The chain is Nucleoid-associated protein ABC0038 from Shouchella clausii (strain KSM-K16) (Alkalihalobacillus clausii).